A 241-amino-acid chain; its full sequence is WAP four-disulfide core domain protein 8 (241 aa).

The first 38 residues, 1–38 (MWTVRTEGGHFPLHSPTFSWRNVAFLLLLSLALEWTSA), serve as a signal peptide directing secretion. Positions 44–91 (IKHKPGLCPKERLTCTTELPDSCNTDFDCKEYQKCCFFACQKKCMDPF) constitute a WAP 1 domain. 15 disulfide bridges follow: C51-C79, C58-C83, C66-C78, C72-C87, C95-C145, C104-C128, C120-C141, C154-C182, C165-C186, C169-C181, C175-C190, C201-C229, C208-C232, C216-C228, and C222-C236. The region spanning 95-145 (CMLPVRHGNCNHEAQRWHFDFKNYRCTPFKYRGCEGNANNFLNEDACRTAC) is the BPTI/Kunitz inhibitor domain. 2 consecutive WAP domains span residues 147–194 (LIVK…ARAW) and 195–240 (TVKK…MDPR).

In terms of tissue distribution, expressed ubiquitously, the highest levels are found in the epididymis followed by testis and trachea.

Its subcellular location is the secreted. The polypeptide is WAP four-disulfide core domain protein 8 (WFDC8) (Homo sapiens (Human)).